A 243-amino-acid chain; its full sequence is Triosephosphate isomerase (243 aa).

9-11 (NWK) provides a ligand contact to substrate. His96 acts as the Electrophile in catalysis. Residue Glu165 is the Proton acceptor of the active site. Substrate is bound by residues Gly171, Ser204, and 225–226 (GG).

Belongs to the triosephosphate isomerase family. As to quaternary structure, homodimer.

It localises to the cytoplasm. It catalyses the reaction D-glyceraldehyde 3-phosphate = dihydroxyacetone phosphate. It participates in carbohydrate biosynthesis; gluconeogenesis. The protein operates within carbohydrate degradation; glycolysis; D-glyceraldehyde 3-phosphate from glycerone phosphate: step 1/1. Its function is as follows. Involved in the gluconeogenesis. Catalyzes stereospecifically the conversion of dihydroxyacetone phosphate (DHAP) to D-glyceraldehyde-3-phosphate (G3P). The chain is Triosephosphate isomerase from Synechococcus sp. (strain WH7803).